The chain runs to 354 residues: Nucleoporin seh1 (354 aa).

6 WD repeats span residues D10 to V49, A55 to S96, D112 to Q153, S161 to V209, D216 to S259, and E270 to C309.

Belongs to the WD repeat SEC13 family. As to quaternary structure, probable component of the nuclear pore complex (NPC). Component of the GATOR complex consisting of mio, Nup44A/Seh1, Im11, Nplr3, Nplr2, Wdr24, Wdr59 and Sec13. Within the GATOR complex, probable component of the GATOR2 subcomplex which is likely composed of mio, Nup44A/Seh1, Wdr24, Wdr59 and Sec13. Interacts with mio. Interacts with Wdr24. The GATOR2 complex associates with unmet in the absence of S-adenosyl-L-methionine; the mio-Wdr24-Nup44A subcomplex is essential and sufficient for this interaction while Wdr59 and Sec13 are dispensable. This association acts as a nutrient sensor to inhibit mTORC1 signaling in the absence of methionine. In terms of tissue distribution, expressed in ovarian cysts.

The protein localises to the nucleus envelope. It localises to the lysosome. Functionally, probable component of the nuclear pore complex (NPC). Involved in maintaining the localization of another nucleoporin Mgtor to the nuclear envelope of early meiotic female germline cells. It is not involved in recruiting the nucleoporins Mgtor, Nup107, Nup153 and FG-containing nucleoporins to the NPC. In terms of biological role, an essential component of the GATOR subcomplex GATOR2 which functions as an activator of the amino acid-sensing branch of the mTORC1 signaling pathway. The two GATOR subcomplexes, GATOR1 and GATOR2, regulate the mTORC1 pathway in order to mediate metabolic homeostasis, female gametogenesis and the response to amino acid limitation and complete starvation. GATOR2 activates the mTORC1 signaling pathway through the inhibition of the GATOR1 subcomplex, controlling the switch to cell proliferation growth under nutrient replete conditions and growth during female oocyte development. This component is required for activating mTORC1 specifically in germline cells to promote cell growth and maintain the oocyte fate, probably influences the organization and/or function of microtubules within ovarian cysts, and promotes accumulation of another GATOR2 complex member mio in germline and somatic tissues. GATOR1 and GATOR2 act at different stages of oogenesis to regulate mTORC1 in order to control meiotic entry and promote oocyte growth and development. After exactly four mitotic cyst divisions, the GATOR1 complex members (Iml1, Nprl2 and Nprl3) down-regulate mTORC1 to slow cellular metabolism and promote the mitotic/meiotic transition. At later stages of oogenesis, the mio and Nup44A components of the GATOR2 complex inhibit GATOR1 and thus activate mTORC1 to promote meiotic progression, and drive oocyte growth and development. In addition to its role in the regulation of the mTORC1 complex, functions independently of mTORC1 to prevent the inappropriate accumulation of autolysosomes in germline tissues. This Drosophila melanogaster (Fruit fly) protein is Nucleoporin seh1.